The primary structure comprises 353 residues: Anthranilate phosphoribosyltransferase (353 aa).

5-phospho-alpha-D-ribose 1-diphosphate contacts are provided by residues G86, 89-90 (GD), 96-99 (NVST), 114-122 (KHGNRAVSG), and S126. G86 provides a ligand contact to anthranilate. Residue S98 participates in Mg(2+) binding. N117 contacts anthranilate. R172 provides a ligand contact to anthranilate. The Mg(2+) site is built by D231 and E232.

It belongs to the anthranilate phosphoribosyltransferase family. Homodimer. Mg(2+) serves as cofactor.

It catalyses the reaction N-(5-phospho-beta-D-ribosyl)anthranilate + diphosphate = 5-phospho-alpha-D-ribose 1-diphosphate + anthranilate. It participates in amino-acid biosynthesis; L-tryptophan biosynthesis; L-tryptophan from chorismate: step 2/5. Its function is as follows. Catalyzes the transfer of the phosphoribosyl group of 5-phosphorylribose-1-pyrophosphate (PRPP) to anthranilate to yield N-(5'-phosphoribosyl)-anthranilate (PRA). This is Anthranilate phosphoribosyltransferase from Pseudomonas syringae pv. syringae (strain B728a).